The sequence spans 713 residues: Mitochondrial intermediate peptidase (713 aa).

The N-terminal 35 residues, 1–35 (MLCVGRLGGLGARAAALPPRRAGRGILEAGIRARR), are a transit peptide targeting the mitochondrion. Residue lysine 126 is modified to N6-acetyllysine. Residue histidine 495 coordinates Zn(2+). Glutamate 496 is a catalytic residue. Zn(2+) is bound by residues histidine 499 and histidine 502.

It belongs to the peptidase M3 family. In terms of assembly, monomer. It depends on Zn(2+) as a cofactor.

The protein resides in the mitochondrion matrix. It carries out the reaction Release of an N-terminal octapeptide as second stage of processing of some proteins imported into the mitochondrion.. Activity is divalent cation-dependent. It is stimulated by manganese, magnesium or calcium ions and reversibly inhibited by zinc, cobalt and iron. In terms of biological role, cleaves proteins, imported into the mitochondrion, to their mature size. The chain is Mitochondrial intermediate peptidase (MIPEP) from Pongo abelii (Sumatran orangutan).